The primary structure comprises 419 residues: GTPase Obg (419 aa).

The 158-residue stretch at 1 to 158 folds into the Obg domain; the sequence is MHFVDEAFNE…FKIKTELKVL (158 aa). Positions 159–324 constitute an OBG-type G domain; that stretch reads ADIGLLGFPS…LKYKMSSFLQ (166 aa). Residues 165 to 172, 190 to 194, 211 to 214, 278 to 281, and 305 to 307 each bind GTP; these read GFPSVGKS, FTTIK, DLPG, NKMD, and SLV. S172 and T192 together coordinate Mg(2+). Residues 342–419 enclose the OCT domain; the sequence is TLTDNLKTIS…KICDRLFDFL (78 aa).

Belongs to the TRAFAC class OBG-HflX-like GTPase superfamily. OBG GTPase family. Monomer. Mg(2+) is required as a cofactor.

The protein localises to the cytoplasm. In terms of biological role, an essential GTPase which binds GTP, GDP and possibly (p)ppGpp with moderate affinity, with high nucleotide exchange rates and a fairly low GTP hydrolysis rate. Plays a role in control of the cell cycle, stress response, ribosome biogenesis and in those bacteria that undergo differentiation, in morphogenesis control. The sequence is that of GTPase Obg from Aster yellows witches'-broom phytoplasma (strain AYWB).